The following is a 270-amino-acid chain: 4-hydroxy-tetrahydrodipicolinate reductase (270 aa).

NAD(+) is bound by residues 9-14 (GAGGRM) and Glu35. Residue Arg36 participates in NADP(+) binding. NAD(+) contacts are provided by residues 99-101 (GTT) and 123-126 (ASNF). Catalysis depends on His156, which acts as the Proton donor/acceptor. Residue His157 participates in (S)-2,3,4,5-tetrahydrodipicolinate binding. Lys160 functions as the Proton donor in the catalytic mechanism. 166-167 (GT) contacts (S)-2,3,4,5-tetrahydrodipicolinate.

The protein belongs to the DapB family.

It is found in the cytoplasm. It carries out the reaction (S)-2,3,4,5-tetrahydrodipicolinate + NAD(+) + H2O = (2S,4S)-4-hydroxy-2,3,4,5-tetrahydrodipicolinate + NADH + H(+). It catalyses the reaction (S)-2,3,4,5-tetrahydrodipicolinate + NADP(+) + H2O = (2S,4S)-4-hydroxy-2,3,4,5-tetrahydrodipicolinate + NADPH + H(+). The protein operates within amino-acid biosynthesis; L-lysine biosynthesis via DAP pathway; (S)-tetrahydrodipicolinate from L-aspartate: step 4/4. In terms of biological role, catalyzes the conversion of 4-hydroxy-tetrahydrodipicolinate (HTPA) to tetrahydrodipicolinate. The chain is 4-hydroxy-tetrahydrodipicolinate reductase from Haemophilus influenzae (strain PittEE).